The primary structure comprises 127 residues: Putative adhesin P1-like protein MPN_203 (127 aa).

A disordered region spans residues 70-90 (TENFTQPQPQPQALKTTTPVF).

The protein belongs to the adhesin P1 family.

This chain is Putative adhesin P1-like protein MPN_203, found in Mycoplasma pneumoniae (strain ATCC 29342 / M129 / Subtype 1) (Mycoplasmoides pneumoniae).